The chain runs to 570 residues: Sulfite reductase [NADPH] hemoprotein beta-component (570 aa).

Residues Cys-434, Cys-440, Cys-479, and Cys-483 each contribute to the [4Fe-4S] cluster site. Cys-483 is a siroheme binding site.

It belongs to the nitrite and sulfite reductase 4Fe-4S domain family. As to quaternary structure, alpha(8)-beta(8). The alpha component is a flavoprotein, the beta component is a hemoprotein. It depends on siroheme as a cofactor. The cofactor is [4Fe-4S] cluster.

It carries out the reaction hydrogen sulfide + 3 NADP(+) + 3 H2O = sulfite + 3 NADPH + 4 H(+). Its pathway is sulfur metabolism; hydrogen sulfide biosynthesis; hydrogen sulfide from sulfite (NADPH route): step 1/1. In terms of biological role, component of the sulfite reductase complex that catalyzes the 6-electron reduction of sulfite to sulfide. This is one of several activities required for the biosynthesis of L-cysteine from sulfate. The chain is Sulfite reductase [NADPH] hemoprotein beta-component from Escherichia coli O7:K1 (strain IAI39 / ExPEC).